A 474-amino-acid polypeptide reads, in one-letter code: Sestrin homolog (474 aa).

This sequence belongs to the sestrin family.

It localises to the nucleus. The protein resides in the cytoplasm. Functionally, may function as a negative feedback regulator of TOR function. The chain is Sestrin homolog from Caenorhabditis elegans.